The chain runs to 421 residues: FAD-dependent monooxygenase atnJ (421 aa).

The helical transmembrane segment at 9 to 29 (LVPLHVVIVGAGIGGLSAAVA) threads the bilayer. Residues E41 and A54 each coordinate FAD. The active site involves R188. Residues D303 and V316 each contribute to the FAD site. The tract at residues 371–392 (RDGDAQAARDSQRKATSGTGQN) is disordered.

It belongs to the paxM FAD-dependent monooxygenase family. Requires FAD as cofactor.

It is found in the membrane. The protein operates within secondary metabolite biosynthesis; terpenoid biosynthesis. FAD-dependent monooxygenase; part of the gene cluster that mediates the biosynthesis of the meroterpenoids arthripenoids. The pathway begins with the HR-PKS atnH that catalyzes two chain-extension steps to form a reduced triketide, which then primes the SAT domain in the NR-PKS atnG to initiate three more cycles of extension to give a linear hexaketide corresponding to the polyketide part of arthripenoids. The FAD-dependent monooxygenase atnJ then performs an oxidative decarboxylation at C11 of the atnH/atnG product, via an electrophilic aromatic hydroxylation with concomitant ipso-decarboxylation. The membrane-bound polyprenyl transferase atnF then introduces a farnesyl group before the FAD-dependent monooxygenase atnK functions as the first epoxidase on terminal C12'-C13' olefin, followed by a second epoxidation on C7'-C8' catalyzed by atnA. The terpene cyclase/mutase atnI then initiates the sequential tricyclic ring formation through protonation of the terminal epoxide and catalyzes the regioselective and stereoselective 6/6/6-tricyclic ring formation. The cytochrome P450 monooxygenase atnM is responsible for hydroxylating both C1' and C10'. The next steps may involve ketoreduction and acetyl transfer by the ketoreductase atnB and the acetyltransferase atnC, and lead to the production of arthripenoid B, the final biosynthetic product of the atn cluster. The hydroquinone moiety in arthripenoid B is prone to undergo spontaneous oxidation to afford a benzoquinone compound, a key intermediate for generating structure diversity. For instance, addition of a cysteine followed by ring contraction gives arthripenoid A, tautomerization gives the main product arthripenoid C, addition of a molecular of water or amine affords arthripenoid D or E, respectively, and loss of one water forms arthripenoid F. The polypeptide is FAD-dependent monooxygenase atnJ (Arthrinium sp).